The primary structure comprises 297 residues: Tyrosine recombinase XerD (297 aa).

The 86-residue stretch at 1-86 (MNDLIDDFLH…SLRSFFHYLM (86 aa)) folds into the Core-binding (CB) domain. Positions 107–291 (SLPKVLNLDD…TKLRLKDVYK (185 aa)) constitute a Tyr recombinase domain. Catalysis depends on residues arginine 147, lysine 171, histidine 243, arginine 246, and histidine 269. Residue tyrosine 278 is the O-(3'-phospho-DNA)-tyrosine intermediate of the active site.

This sequence belongs to the 'phage' integrase family. XerD subfamily. Forms a cyclic heterotetrameric complex composed of two molecules of XerC and two molecules of XerD.

It is found in the cytoplasm. Site-specific tyrosine recombinase, which acts by catalyzing the cutting and rejoining of the recombining DNA molecules. The XerC-XerD complex is essential to convert dimers of the bacterial chromosome into monomers to permit their segregation at cell division. It also contributes to the segregational stability of plasmids. The polypeptide is Tyrosine recombinase XerD (Listeria innocua serovar 6a (strain ATCC BAA-680 / CLIP 11262)).